A 627-amino-acid chain; its full sequence is Serine/threonine-protein kinase Nek5 (627 aa).

The Protein kinase domain occupies 4-255 (FHLIKIIGEG…VTSLLKRPFL (252 aa)). ATP is bound by residues 10 to 18 (IGEGTFGKV) and Lys33. Asp124 acts as the Proton acceptor in catalysis. Residues 563 to 580 (QLEPGSDEDDIKFEESED) show a composition bias toward acidic residues. 2 disordered regions span residues 563–582 (QLEP…EDEL) and 591–627 (EKLA…KKLQ). Residues 609–619 (NAEEPGEKEKT) show a composition bias toward basic and acidic residues.

Belongs to the protein kinase superfamily. NEK Ser/Thr protein kinase family. NIMA subfamily. Requires Mg(2+) as cofactor.

Its subcellular location is the cell projection. It localises to the cilium. The protein localises to the flagellum. It catalyses the reaction L-seryl-[protein] + ATP = O-phospho-L-seryl-[protein] + ADP + H(+). It carries out the reaction L-threonyl-[protein] + ATP = O-phospho-L-threonyl-[protein] + ADP + H(+). This Mus musculus (Mouse) protein is Serine/threonine-protein kinase Nek5 (Nek5).